Reading from the N-terminus, the 121-residue chain is NAD(P)H-quinone oxidoreductase subunit M (121 aa).

Belongs to the complex I NdhM subunit family. In terms of assembly, NDH-1 can be composed of about 15 different subunits; different subcomplexes with different compositions have been identified which probably have different functions.

The protein localises to the cellular thylakoid membrane. The enzyme catalyses a plastoquinone + NADH + (n+1) H(+)(in) = a plastoquinol + NAD(+) + n H(+)(out). It carries out the reaction a plastoquinone + NADPH + (n+1) H(+)(in) = a plastoquinol + NADP(+) + n H(+)(out). In terms of biological role, NDH-1 shuttles electrons from an unknown electron donor, via FMN and iron-sulfur (Fe-S) centers, to quinones in the respiratory and/or the photosynthetic chain. The immediate electron acceptor for the enzyme in this species is believed to be plastoquinone. Couples the redox reaction to proton translocation, and thus conserves the redox energy in a proton gradient. Cyanobacterial NDH-1 also plays a role in inorganic carbon-concentration. This chain is NAD(P)H-quinone oxidoreductase subunit M, found in Synechococcus sp. (strain JA-3-3Ab) (Cyanobacteria bacterium Yellowstone A-Prime).